A 468-amino-acid polypeptide reads, in one-letter code: UDP-N-acetylmuramate--L-alanine ligase (468 aa).

Gly112–Thr118 contacts ATP.

Belongs to the MurCDEF family.

It is found in the cytoplasm. It catalyses the reaction UDP-N-acetyl-alpha-D-muramate + L-alanine + ATP = UDP-N-acetyl-alpha-D-muramoyl-L-alanine + ADP + phosphate + H(+). Its pathway is cell wall biogenesis; peptidoglycan biosynthesis. Functionally, cell wall formation. The sequence is that of UDP-N-acetylmuramate--L-alanine ligase from Bordetella bronchiseptica (strain ATCC BAA-588 / NCTC 13252 / RB50) (Alcaligenes bronchisepticus).